An 82-amino-acid polypeptide reads, in one-letter code: NAD(P)H-quinone oxidoreductase subunit O (82 aa).

The protein belongs to the complex I NdhO subunit family. NDH-1 can be composed of about 15 different subunits; different subcomplexes with different compositions have been identified which probably have different functions.

It localises to the cellular thylakoid membrane. The catalysed reaction is a plastoquinone + NADH + (n+1) H(+)(in) = a plastoquinol + NAD(+) + n H(+)(out). The enzyme catalyses a plastoquinone + NADPH + (n+1) H(+)(in) = a plastoquinol + NADP(+) + n H(+)(out). Functionally, NDH-1 shuttles electrons from an unknown electron donor, via FMN and iron-sulfur (Fe-S) centers, to quinones in the respiratory and/or the photosynthetic chain. The immediate electron acceptor for the enzyme in this species is believed to be plastoquinone. Couples the redox reaction to proton translocation, and thus conserves the redox energy in a proton gradient. Cyanobacterial NDH-1 also plays a role in inorganic carbon-concentration. The protein is NAD(P)H-quinone oxidoreductase subunit O of Prochlorococcus marinus (strain MIT 9211).